A 682-amino-acid chain; its full sequence is Kinesin-like protein KIF2A (682 aa).

Residues 1–192 (MVTSLNEDSE…LDYRPLTTSD (192 aa)) are globular. Residues 39–129 (LAPDEEIDPG…GKKDFGLASR (91 aa)) are disordered. Residues 99-115 (IEQSASRQQNGSVSDIS) show a composition bias toward polar residues. The Kinesin motor domain maps to 198–528 (RICVCVRKRP…LRYANRVKEL (331 aa)). 288-295 (GQTGSGKT) is an ATP binding site. The stretch at 638-673 (QLEAILEKKIDILTELRDKVKSFRAALQEEEHASKQ) forms a coiled coil.

This sequence belongs to the TRAFAC class myosin-kinesin ATPase superfamily. Kinesin family. MCAK/KIF2 subfamily. As to quaternary structure, interacts with aurka and plk1. In terms of processing, phosphorylation by plk1 promotes location at spindle microtubules and spindle poles, and enhances its microtubule depolymerization activity. Post-translationally, phosphorylation by AURKA interferes with location at spindle microtubules and spindle poles, and inhibits its microtubule depolymerization activity.

It is found in the cytoplasm. It localises to the cytoskeleton. Its subcellular location is the microtubule organizing center. The protein resides in the centrosome. The protein localises to the spindle pole. It is found in the spindle. Plus end-directed microtubule-dependent motor. May regulate microtubule dynamics during axonal growth. Required for normal progression through mitosis. Required for normal congress of chromosomes at the metaphase plate. Required for normal spindle dynamics during mitosis. Promotes spindle turnover. Implicated in formation of bipolar mitotic spindles Has microtubule depolymerization activity. The polypeptide is Kinesin-like protein KIF2A (kif2a) (Xenopus laevis (African clawed frog)).